We begin with the raw amino-acid sequence, 363 residues long: Holliday junction branch migration complex subunit RuvB (363 aa).

The interval 1–44 is disordered; sequence MAIKRNQGHGLPPKRDPALGRDALTTSQALPEDQEQSANEDRIR. A large ATPase domain (RuvB-L) region spans residues 13–204; sequence PKRDPALGRD…FGLIQRLRFY (192 aa). Residues Ile43, Arg44, Gly85, Lys88, Thr89, Thr90, Arg194, Tyr204, and Arg241 each contribute to the ATP site. Position 89 (Thr89) interacts with Mg(2+). Positions 205-275 are small ATPAse domain (RuvB-S); it reads EVDELIAIVH…VAATALDLYN (71 aa). Residues 278 to 363 form a head domain (RuvB-H) region; it reads ALGLDWTDRL…EQSTQLDFLP (86 aa). Residues Arg333 and Arg338 each contribute to the DNA site.

This sequence belongs to the RuvB family. In terms of assembly, homohexamer. Forms an RuvA(8)-RuvB(12)-Holliday junction (HJ) complex. HJ DNA is sandwiched between 2 RuvA tetramers; dsDNA enters through RuvA and exits via RuvB. An RuvB hexamer assembles on each DNA strand where it exits the tetramer. Each RuvB hexamer is contacted by two RuvA subunits (via domain III) on 2 adjacent RuvB subunits; this complex drives branch migration. In the full resolvosome a probable DNA-RuvA(4)-RuvB(12)-RuvC(2) complex forms which resolves the HJ.

Its subcellular location is the cytoplasm. It catalyses the reaction ATP + H2O = ADP + phosphate + H(+). The RuvA-RuvB-RuvC complex processes Holliday junction (HJ) DNA during genetic recombination and DNA repair, while the RuvA-RuvB complex plays an important role in the rescue of blocked DNA replication forks via replication fork reversal (RFR). RuvA specifically binds to HJ cruciform DNA, conferring on it an open structure. The RuvB hexamer acts as an ATP-dependent pump, pulling dsDNA into and through the RuvAB complex. RuvB forms 2 homohexamers on either side of HJ DNA bound by 1 or 2 RuvA tetramers; 4 subunits per hexamer contact DNA at a time. Coordinated motions by a converter formed by DNA-disengaged RuvB subunits stimulates ATP hydrolysis and nucleotide exchange. Immobilization of the converter enables RuvB to convert the ATP-contained energy into a lever motion, pulling 2 nucleotides of DNA out of the RuvA tetramer per ATP hydrolyzed, thus driving DNA branch migration. The RuvB motors rotate together with the DNA substrate, which together with the progressing nucleotide cycle form the mechanistic basis for DNA recombination by continuous HJ branch migration. Branch migration allows RuvC to scan DNA until it finds its consensus sequence, where it cleaves and resolves cruciform DNA. The chain is Holliday junction branch migration complex subunit RuvB from Picosynechococcus sp. (strain ATCC 27264 / PCC 7002 / PR-6) (Agmenellum quadruplicatum).